The primary structure comprises 265 residues: Expansin-like A1 (265 aa).

The first 20 residues, 1 to 20 (MGSFLFLIVVIFLFSSSVNA), serve as a signal peptide directing secretion. The Expansin-like EG45 domain occupies 41 to 147 (SGACAYGSMA…QRVPCDYGNK (107 aa)). A helical transmembrane segment spans residues 42–62 (GACAYGSMATSFFAGHIAAAI). Asn-99 and Asn-102 each carry an N-linked (GlcNAc...) asparagine glycan. One can recognise an Expansin-like CBD domain in the interval 161 to 244 (NYLEIKLLYQ…NWEAGKIYDA (84 aa)).

It belongs to the expansin family. Expansin-like A subfamily.

It localises to the membrane. This is Expansin-like A1 (EXLA1) from Arabidopsis thaliana (Mouse-ear cress).